The chain runs to 90 residues: Molybdopterin synthase sulfur carrier subunit (90 aa).

Position 90 is a 1-thioglycine; alternate (glycine 90). Glycine 90 is subject to Glycyl adenylate; alternate.

It belongs to the MoaD family. MOCS2A subfamily. As to quaternary structure, heterotetramer; composed of 2 small (Mocs2A) and 2 large (Mocs2B) subunits. In terms of processing, C-terminal thiocarboxylation occurs in 2 steps, it is first acyl-adenylated (-COAMP) via the hesA/moeB/thiF part of MOCS3, then thiocarboxylated (-COSH) via the rhodanese domain of MOCS3.

It is found in the cytoplasm. The protein operates within cofactor biosynthesis; molybdopterin biosynthesis. Acts as a sulfur carrier required for molybdopterin biosynthesis. Component of the molybdopterin synthase complex that catalyzes the conversion of precursor Z into molybdopterin by mediating the incorporation of 2 sulfur atoms into precursor Z to generate a dithiolene group. In the complex, serves as sulfur donor by being thiocarboxylated (-COSH) at its C-terminus by MOCS3. After interaction with Mocs2B, the sulfur is then transferred to precursor Z to form molybdopterin. Involved during biosynthesis of the molybdenum cofactor. The polypeptide is Molybdopterin synthase sulfur carrier subunit (Drosophila melanogaster (Fruit fly)).